A 347-amino-acid chain; its full sequence is NADH-ubiquinone oxidoreductase chain 2 (347 aa).

The next 10 membrane-spanning stretches (helical) occupy residues 1 to 21 (MNPIIFFMIMLTIILGTTIVM), 25 to 45 (HWLTVWMGFEMNMLAIIPMLM), 59 to 79 (YFLTQATASMLLLLAITINLM), 96 to 116 (IILTIALAMKLGLAPFHFWVP), 148 to 168 (IINLDLLLMMGLLSVMIGGWG), 178 to 198 (IMAYSSIAHMGWMVTILIYNP), 200 to 220 (LTMLNLTIYIMMTLTMFMLLI), 237 to 257 (MPLITTMMLTTLLSMGGLPPL), 274 to 294 (NSIILPTFMAITALLNLYFYM), and 326 to 346 (LSPLMVISTMTLPLTPMMMIL).

The protein belongs to the complex I subunit 2 family. Core subunit of respiratory chain NADH dehydrogenase (Complex I) which is composed of 45 different subunits. Interacts with TMEM242.

It is found in the mitochondrion inner membrane. It catalyses the reaction a ubiquinone + NADH + 5 H(+)(in) = a ubiquinol + NAD(+) + 4 H(+)(out). Core subunit of the mitochondrial membrane respiratory chain NADH dehydrogenase (Complex I) which catalyzes electron transfer from NADH through the respiratory chain, using ubiquinone as an electron acceptor. Essential for the catalytic activity and assembly of complex I. This Gardnerycteris crenulata (Striped hairy-nosed bat) protein is NADH-ubiquinone oxidoreductase chain 2.